We begin with the raw amino-acid sequence, 715 residues long: Interferon-induced GTP-binding protein Mx2 (715 aa).

Residues 1–14 (MSKAHKSWPHRRRN) show a composition bias toward basic residues. Disordered regions lie at residues 1–24 (MSKA…SLKK) and 69–88 (NNQP…PENN). A compositionally biased stretch (polar residues) spans 69–80 (NNQPLPGNTSQP). Residues 115 to 387 (DLALPAIAVI…LITHIQKSLP (273 aa)) enclose the Dynamin-type G domain. The G1 motif stretch occupies residues 125–132 (GDQSSGKS). 125–132 (GDQSSGKS) is a GTP binding site. The tract at residues 150–152 (VTR) is G2 motif. A G3 motif region spans residues 225 to 228 (DLPG). GTP-binding positions include 225–229 (DLPGI) and 294–297 (TKPD). The interval 294 to 297 (TKPD) is G4 motif. The interval 326–329 (KCRG) is G5 motif. A GED domain is found at 623 to 714 (FNEIGVHLNA…ALCQFSSKEI (92 aa)).

This sequence belongs to the TRAFAC class dynamin-like GTPase superfamily. Dynamin/Fzo/YdjA family.

Its subcellular location is the cytoplasm. The protein resides in the nucleus. In terms of biological role, interferon-induced dynamin-like GTPase with antiviral activity. This chain is Interferon-induced GTP-binding protein Mx2 (MX2), found in Macaca mulatta (Rhesus macaque).